Reading from the N-terminus, the 767-residue chain is Transient receptor potential cation channel subfamily V member 6 (767 aa).

Residues M1 to P33 form a disordered region. At M1–P366 the chain is on the cytoplasmic side. ANK repeat units follow at residues I84–Q114, M118–F147, and E156–A185. The tract at residues E133–P143 is interaction with calmodulin. A phosphotyrosine; by SRC mark is found at Y201 and Y202. ANK repeat units follow at residues Y202–A231, L235–N276, and Q278–W307. A helical transmembrane segment spans residues Y367 to V387. The Extracellular segment spans residues Y388–R424. A glycan (N-linked (GlcNAc...) asparagine) is linked at N397. A helical membrane pass occupies residues L425–F447. Residues R448–G462 are Cytoplasmic-facing. The chain crosses the membrane as a helical span at residues P463–R482. The Extracellular portion of the chain corresponds to L483–G488. Residues E489–A508 form a helical membrane-spanning segment. Residues R509–D528 are Cytoplasmic-facing. The helical transmembrane segment at L529 to F551 threads the bilayer. Topologically, residues Q552 to D564 are extracellular. Positions Y565–A584 form an intramembrane region, pore-forming. Residues I580–A584 carry the Selectivity filter motif. Ca(2+) is bound at residue D581. At N585–S595 the chain is on the extracellular side. The chain crosses the membrane as a helical span at residues I596–M616. Topologically, residues M617–I767 are cytoplasmic. The tract at residues V637 to V641 is interaction with S100A10. Positions A689–E707 are interaction with calmodulin.

The protein belongs to the transient receptor (TC 1.A.4) family. TrpV subfamily. TRPV6 sub-subfamily. In terms of assembly, homotetramer. Probably also forms heterotetramers with TRPV5. Interacts with TRPV5. Interacts with S100A10 and probably with the ANAX2-S100A10 heterotetramer. The interaction with S100A10 is required for the trafficking to the plasma membrane. Interacts with calmodulin. Interacts with BSPRY. Interacts with TCAF1 and TCAF2. In terms of processing, glycosylated. Post-translationally, phosphorylation at Tyr-201 and Tyr-202 by SRC leads to an increased calcium influx through the channel. Probably dephosphorylated at these sites by PTPN1. Expressed in duodenum, proximal jejunum, cecum, and colon.

Its subcellular location is the cell membrane. It carries out the reaction Ca(2+)(in) = Ca(2+)(out). Functionally, calcium selective cation channel that mediates Ca(2+) uptake in various tissues, including the intestine. Important for normal Ca(2+) ion homeostasis in the body, including bone and skin. The channel is activated by low internal calcium level, probably including intracellular calcium store depletion, and the current exhibits an inward rectification. Inactivation includes both a rapid Ca(2+)-dependent and a slower Ca(2+)-calmodulin-dependent mechanism; the latter may be regulated by phosphorylation. In vitro, is slowly inhibited by Mg(2+) in a voltage-independent manner. Heteromeric assembly with TRPV5 seems to modify channel properties. TRPV5-TRPV6 heteromultimeric concatemers exhibit voltage-dependent gating. This chain is Transient receptor potential cation channel subfamily V member 6 (Trpv6), found in Rattus norvegicus (Rat).